Reading from the N-terminus, the 272-residue chain is MSTAKKDYKRITTKSLIEMKSNGEKISMLTAYDYTMAKIVDTAGVDVILVGDSASNVMAGHETTLPITLDQMIYHASSVVRAVERGLVVVDLPFGSYQSDPKEALRSAIRIMKESGAHAVKLEGGKEIKESIKKILNAGIPVMGHLGLTPQSIYKFGTYSVRAKEEQEAEKLIEDAQMLEKVGCFGVVLEKIPADLAKKVADSISIPVIGIGAGGAVDGQVLVIHDMLGMNNEFSPRFLRRYLNLYEEMTKAIGQYAADVKSSDFPNASEQY.

D52 and D91 together coordinate Mg(2+). Residues 52–53, D91, and K121 contribute to the 3-methyl-2-oxobutanoate site; that span reads DS. E123 contacts Mg(2+). E190 serves as the catalytic Proton acceptor.

It belongs to the PanB family. In terms of assembly, homodecamer; pentamer of dimers. Requires Mg(2+) as cofactor.

The protein resides in the cytoplasm. The catalysed reaction is 3-methyl-2-oxobutanoate + (6R)-5,10-methylene-5,6,7,8-tetrahydrofolate + H2O = 2-dehydropantoate + (6S)-5,6,7,8-tetrahydrofolate. It participates in cofactor biosynthesis; (R)-pantothenate biosynthesis; (R)-pantoate from 3-methyl-2-oxobutanoate: step 1/2. Its function is as follows. Catalyzes the reversible reaction in which hydroxymethyl group from 5,10-methylenetetrahydrofolate is transferred onto alpha-ketoisovalerate to form ketopantoate. This chain is 3-methyl-2-oxobutanoate hydroxymethyltransferase, found in Flavobacterium johnsoniae (strain ATCC 17061 / DSM 2064 / JCM 8514 / BCRC 14874 / CCUG 350202 / NBRC 14942 / NCIMB 11054 / UW101) (Cytophaga johnsonae).